A 146-amino-acid chain; its full sequence is uncharacterized protein (146 aa).

Positions 1–137 (MLSQEFFNSF…TINVMNQIHE (137 aa)) constitute an HTH marR-type domain.

This is an uncharacterized protein from Staphylococcus aureus (strain N315).